The following is a 178-amino-acid chain: Crossover junction endodeoxyribonuclease RuvC (178 aa).

Catalysis depends on residues Asp11, Glu71, and Asp143. Residues Asp11, Glu71, and Asp143 each contribute to the Mg(2+) site.

This sequence belongs to the RuvC family. In terms of assembly, homodimer which binds Holliday junction (HJ) DNA. The HJ becomes 2-fold symmetrical on binding to RuvC with unstacked arms; it has a different conformation from HJ DNA in complex with RuvA. In the full resolvosome a probable DNA-RuvA(4)-RuvB(12)-RuvC(2) complex forms which resolves the HJ. Mg(2+) is required as a cofactor.

The protein localises to the cytoplasm. The enzyme catalyses Endonucleolytic cleavage at a junction such as a reciprocal single-stranded crossover between two homologous DNA duplexes (Holliday junction).. Functionally, the RuvA-RuvB-RuvC complex processes Holliday junction (HJ) DNA during genetic recombination and DNA repair. Endonuclease that resolves HJ intermediates. Cleaves cruciform DNA by making single-stranded nicks across the HJ at symmetrical positions within the homologous arms, yielding a 5'-phosphate and a 3'-hydroxyl group; requires a central core of homology in the junction. The consensus cleavage sequence is 5'-(A/T)TT(C/G)-3'. Cleavage occurs on the 3'-side of the TT dinucleotide at the point of strand exchange. HJ branch migration catalyzed by RuvA-RuvB allows RuvC to scan DNA until it finds its consensus sequence, where it cleaves and resolves the cruciform DNA. The sequence is that of Crossover junction endodeoxyribonuclease RuvC from Neisseria meningitidis serogroup A / serotype 4A (strain DSM 15465 / Z2491).